The sequence spans 186 residues: ATP synthase subunit delta (186 aa).

It belongs to the ATPase delta chain family. In terms of assembly, F-type ATPases have 2 components, F(1) - the catalytic core - and F(0) - the membrane proton channel. F(1) has five subunits: alpha(3), beta(3), gamma(1), delta(1), epsilon(1). F(0) has three main subunits: a(1), b(2) and c(10-14). The alpha and beta chains form an alternating ring which encloses part of the gamma chain. F(1) is attached to F(0) by a central stalk formed by the gamma and epsilon chains, while a peripheral stalk is formed by the delta and b chains.

Its subcellular location is the cell inner membrane. F(1)F(0) ATP synthase produces ATP from ADP in the presence of a proton or sodium gradient. F-type ATPases consist of two structural domains, F(1) containing the extramembraneous catalytic core and F(0) containing the membrane proton channel, linked together by a central stalk and a peripheral stalk. During catalysis, ATP synthesis in the catalytic domain of F(1) is coupled via a rotary mechanism of the central stalk subunits to proton translocation. Functionally, this protein is part of the stalk that links CF(0) to CF(1). It either transmits conformational changes from CF(0) to CF(1) or is implicated in proton conduction. The protein is ATP synthase subunit delta of Brucella melitensis biotype 2 (strain ATCC 23457).